The sequence spans 255 residues: Dehydrogenase/reductase SDR family member 11 (255 aa).

A signal peptide spans Met-1 to Ala-25. Residues Gly-13–Ile-18, Arg-38–Thr-39, Glu-44, Asp-65–Leu-66, and Asn-92 each bind NADP(+). Substrate is bound by residues Ser-146 and Tyr-161. Residues Tyr-161, Lys-165, Val-196–Gln-199, and Lys-203 each bind NADP(+). The active-site Proton acceptor is Tyr-161.

This sequence belongs to the short-chain dehydrogenases/reductases (SDR) family.

The protein resides in the secreted. The catalysed reaction is a 3beta-hydroxysteroid + NADP(+) = a 3-oxosteroid + NADPH + H(+). It catalyses the reaction 17beta-estradiol + NAD(+) = estrone + NADH + H(+). It carries out the reaction 17beta-estradiol + NADP(+) = estrone + NADPH + H(+). The protein operates within steroid biosynthesis; estrogen biosynthesis. With respect to regulation, inhibited by flavonoids including apigenin, luteolin, genistein, kaempferol and quercetin and also by carbenoxolone, zearalenone, glycyrrhetinic, curcumin and flufenamic acid. In terms of biological role, catalyzes the conversion of the 17-keto group of estrone, 4- and 5-androstenes and 5-alpha-androstanes into their 17-beta-hydroxyl metabolites and the conversion of the 3-keto group of 3-, 3,17- and 3,20- diketosteroids into their 3-hydroxyl metabolites. Exhibits reductive 3-beta-hydroxysteroid dehydrogenase activity toward 5-beta-androstanes, 5-beta-pregnanes, 4-pregnenes and bile acids. May also reduce endogenous and exogenous alpha-dicarbonyl compounds and xenobiotic alicyclic ketones. This chain is Dehydrogenase/reductase SDR family member 11 (DHRS11), found in Bos taurus (Bovine).